We begin with the raw amino-acid sequence, 143 residues long: UPF0763 protein HH_0976 (143 aa).

It belongs to the UPF0763 family.

The polypeptide is UPF0763 protein HH_0976 (Helicobacter hepaticus (strain ATCC 51449 / 3B1)).